The chain runs to 260 residues: Protein-L-isoaspartate O-methyltransferase (260 aa).

Residues 1-27 (MKSPVAGAVLDPSTPPPTTGTSWRWPG) are disordered. Residue serine 92 is part of the active site.

It belongs to the methyltransferase superfamily. L-isoaspartyl/D-aspartyl protein methyltransferase family.

The protein resides in the cytoplasm. It carries out the reaction [protein]-L-isoaspartate + S-adenosyl-L-methionine = [protein]-L-isoaspartate alpha-methyl ester + S-adenosyl-L-homocysteine. Functionally, catalyzes the methyl esterification of L-isoaspartyl residues in peptides and proteins that result from spontaneous decomposition of normal L-aspartyl and L-asparaginyl residues. It plays a role in the repair and/or degradation of damaged proteins. This Aeropyrum pernix (strain ATCC 700893 / DSM 11879 / JCM 9820 / NBRC 100138 / K1) protein is Protein-L-isoaspartate O-methyltransferase (pcm).